The sequence spans 554 residues: Glucose-6-phosphate isomerase (554 aa).

Residue Glu-359 is the Proton donor of the active site. Catalysis depends on residues His-390 and Lys-518.

The protein belongs to the GPI family.

The protein resides in the cytoplasm. The enzyme catalyses alpha-D-glucose 6-phosphate = beta-D-fructose 6-phosphate. It participates in carbohydrate biosynthesis; gluconeogenesis. It functions in the pathway carbohydrate degradation; glycolysis; D-glyceraldehyde 3-phosphate and glycerone phosphate from D-glucose: step 2/4. Catalyzes the reversible isomerization of glucose-6-phosphate to fructose-6-phosphate. The polypeptide is Glucose-6-phosphate isomerase (Stutzerimonas stutzeri (strain A1501) (Pseudomonas stutzeri)).